Here is a 260-residue protein sequence, read N- to C-terminus: Endonuclease NucS (260 aa).

The protein belongs to the NucS endonuclease family.

The protein localises to the cytoplasm. Its function is as follows. Cleaves both 3' and 5' ssDNA extremities of branched DNA structures. This Methanopyrus kandleri (strain AV19 / DSM 6324 / JCM 9639 / NBRC 100938) protein is Endonuclease NucS.